The chain runs to 1637 residues: Serine/threonine-protein kinase Genghis Khan (1637 aa).

A Protein kinase domain is found at 100–369 (FDILKIIGRG…IQDFMDHPWF (270 aa)). Residues 106 to 114 (IGRGAFGEV) and lysine 129 each bind ATP. The active-site Proton acceptor is aspartate 224. An AGC-kinase C-terminal domain is found at 370–440 (VGIDWKNIRQ…SLTSSSTLDS (71 aa)). Coiled coils occupy residues 473-587 (VDSV…EDAV), 643-688 (SEKL…LKYT), and 839-881 (DELS…DLQK). A disordered region spans residues 538–575 (RNQKQKLSRQVRDKEEELDGAMQKNDSLRNELRKSDKT). Over residues 563–575 (DSLRNELRKSDKT) the composition is skewed to basic and acidic residues. Threonine 895 is modified (phosphothreonine). Residues 952-971 (NNKDHSSMKEASVSDLSREE) form a disordered region. A Phorbol-ester/DAG-type zinc finger spans residues 989–1039 (IHQFLVRTFSSPTKCNHCTSLMVGLTRQGVVCEICGFACHTICCQKVPTTC). In terms of domain architecture, PH spans 1059 to 1177 (GTAYEGYVKV…WVIALGELHR (119 aa)). The CNH domain occupies 1203–1489 (IRNALCSVII…LPLNNLGNVV (287 aa)). The CRIB domain occupies 1546–1559 (ISAPTNFNHISHMG). Serine 1584 is modified (phosphoserine). A disordered region spans residues 1611–1637 (DYGNDNIISRTPSPMASSFMDGLSNND). The span at 1616 to 1626 (NIISRTPSPMA) shows a compositional bias: polar residues.

It belongs to the protein kinase superfamily. AGC Ser/Thr protein kinase family. DMPK subfamily. In terms of assembly, interacts tightly with GTP-bound but not GDP-bound Cdc42.

The enzyme catalyses L-seryl-[protein] + ATP = O-phospho-L-seryl-[protein] + ADP + H(+). It catalyses the reaction L-threonyl-[protein] + ATP = O-phospho-L-threonyl-[protein] + ADP + H(+). Its function is as follows. Acts as a downstream effector for the regulation of actin polymerization by Cdc42. The protein is Serine/threonine-protein kinase Genghis Khan (gek) of Drosophila melanogaster (Fruit fly).